Reading from the N-terminus, the 466-residue chain is Sucrose-6-phosphate hydrolase (466 aa).

Substrate-binding positions include 38–41 (LMND), glutamine 57, 100–101 (YS), 159–160 (RD), and glutamate 218. The active site involves aspartate 41.

The protein belongs to the glycosyl hydrolase 32 family.

It is found in the cytoplasm. It carries out the reaction Hydrolysis of terminal non-reducing beta-D-fructofuranoside residues in beta-D-fructofuranosides.. The protein operates within glycan biosynthesis; sucrose metabolism. In terms of biological role, enables the bacterium to metabolize sucrose as a sole carbon source. The sequence is that of Sucrose-6-phosphate hydrolase (scrB) from Salmonella typhimurium.